The sequence spans 662 residues: Sporulation protein RMD8 (662 aa).

3 disordered regions span residues 1–136, 286–320, and 346–406; these read MSYK…RTSK, YELE…SFNP, and LKKE…QNDF. Position 2 is an N-acetylserine (Ser-2). The segment covering 99–121 has biased composition (basic and acidic residues); sequence SARREERLSSSSSDRPRQYERLS. Over residues 286-304 the composition is skewed to polar residues; that stretch reads YELETSGNNNNANQDTTTV. The span at 383–395 shows a compositional bias: low complexity; the sequence is SSRSPASPSSIST. Residues 630–647 form a helical membrane-spanning segment; sequence VTWWFILVILFGVIFSLT.

Belongs to the RMD1/sif2 family.

It localises to the membrane. Functionally, required for sporulation. In Saccharomyces cerevisiae (strain ATCC 204508 / S288c) (Baker's yeast), this protein is Sporulation protein RMD8 (RMD8).